A 968-amino-acid polypeptide reads, in one-letter code: MPFTFGQRWISDTESELGLGTVVAMDARTVTLLFPSTGENRLYARSDSPVTRVMFNPGDTITSHEGWQLHIDEVKEENGLLVYVGTRLDTEETNVTLREVLLDSKLVFSKPQDRLFAGQIDRMDRFALRYRARKFQSEQYRMPYSGLRGQRTNLIPHQLNIAHDVGRRHAPRVLLADEVGLGKTIEAGMILHQQLLSGAAERVLIIVPETLQHQWLVEMLRRFNLRFALFDDERYTEAQHDAYNPFETEQLVICSLDFARRNKQRLEHLCDAEWDLLVVDEAHHLVWSTDAPSREYMAIEQLAERVPGVLLLTATPEQLGMESHFARLRLLDPNRFHDFEQFVEEQKNYRPVADAVAMLLAGNKLSNDELNRLGDLIGEQDIEPLLQAANSDRDDAQAARDELVSMLMDRHGTSRVLFRNTRNGVKGFPKRELHTVKLPLPTQYQTAIKVSGIMGARKSAEDRARDMLYPEQIYQEFEGDTGTWWNFDPRVEWLMGYLTSHRSQKVLVICAKATTALQLEQVLREREGIRAAVFHEGMSIIERDRAAAWFAEEDTGAQVLLCSEIGSEGRNFQFASNLVMFDLPFNPDLLEQRIGRLDRIGQAHDIQIHVPYLEKTAQSVLVRWYHEGLDAFEHTCPTGRAIYDSAYASLINYLAAPEETDGFDDLIKSCREQHEALKAQLEQGRDRLLEIHSNGGEKAQQLAQSIEEQDDDTNLIAFAMNLFDIVGINQDDRGDNLIVLTPSDHMLVPDFPGLPEDGCTITFERDVALSREDAQFITWEHPLIRNGLDLILSGDTGSSTISLLKNKALPVGTLLVELVYVVEAQAPKQLQLNRFLPPTPVRMLLDKNGNNLAAQVEFETFNRQLSAVNRHTGSKLVNAVQQDVHAILQLGETQIEKSARALIDNARREADEKLSGELSRLEALRAVNPNIRDDELAAIDSNRQQVLESLNQAGWRLDALRFIVVTHQ.

The Helicase ATP-binding domain maps to 164–334 (DVGRRHAPRV…FARLRLLDPN (171 aa)). An ATP-binding site is contributed by 177–184 (DEVGLGKT). Positions 280-283 (DEAH) match the DEAH box motif. The Helicase C-terminal domain maps to 490-685 (RVEWLMGYLT…ALKAQLEQGR (196 aa)).

This sequence belongs to the SNF2/RAD54 helicase family. RapA subfamily. In terms of assembly, interacts with the RNAP. Has a higher affinity for the core RNAP than for the holoenzyme. Its ATPase activity is stimulated by binding to RNAP.

In terms of biological role, transcription regulator that activates transcription by stimulating RNA polymerase (RNAP) recycling in case of stress conditions such as supercoiled DNA or high salt concentrations. Probably acts by releasing the RNAP, when it is trapped or immobilized on tightly supercoiled DNA. Does not activate transcription on linear DNA. Probably not involved in DNA repair. This chain is RNA polymerase-associated protein RapA, found in Salmonella paratyphi A (strain ATCC 9150 / SARB42).